The following is a 352-amino-acid chain: N-acetyl-gamma-glutamyl-phosphate reductase (352 aa).

The active site involves C155.

The protein belongs to the NAGSA dehydrogenase family. Type 1 subfamily.

Its subcellular location is the cytoplasm. It catalyses the reaction N-acetyl-L-glutamate 5-semialdehyde + phosphate + NADP(+) = N-acetyl-L-glutamyl 5-phosphate + NADPH + H(+). It participates in amino-acid biosynthesis; L-arginine biosynthesis; N(2)-acetyl-L-ornithine from L-glutamate: step 3/4. Its function is as follows. Catalyzes the NADPH-dependent reduction of N-acetyl-5-glutamyl phosphate to yield N-acetyl-L-glutamate 5-semialdehyde. This Picosynechococcus sp. (strain ATCC 27264 / PCC 7002 / PR-6) (Agmenellum quadruplicatum) protein is N-acetyl-gamma-glutamyl-phosphate reductase.